The sequence spans 80 residues: U1-nemetoxin-Csp1a (80 aa).

The first 20 residues, 1-20 (MKYFVVFCVLIIAVAAFTSA), serve as a signal peptide directing secretion. Positions 21–41 (AEDGEVFEENPLEFPKTIQKR) are excised as a propeptide. Cystine bridges form between cysteine 42-cysteine 56, cysteine 49-cysteine 60, cysteine 55-cysteine 77, and cysteine 66-cysteine 73.

The protein belongs to the neurotoxin 13 (insecticidal toxin ABC) family. 02 (Calisoga) subfamily. As to expression, expressed by the venom gland.

It is found in the secreted. In terms of biological role, causes paralysis to insect larvae (H.virescens). This toxin is active only on insects. This chain is U1-nemetoxin-Csp1a, found in Calisoga sp. (Spider).